A 122-amino-acid chain; its full sequence is Sperm-egg fusion protein LLCFC1 (122 aa).

The N-terminal stretch at 1–28 (MPPLAPQLCRAVFLVPILLLLQVKPLNG) is a signal peptide. Positions 27-51 (NGSPGPKDGSQTEKTPSADQNQEQF) are disordered. Residues 38-49 (TEKTPSADQNQE) show a composition bias toward polar residues.

It localises to the secreted. Sperm protein required for fusion of sperm with the egg membrane during fertilization. This chain is Sperm-egg fusion protein LLCFC1, found in Homo sapiens (Human).